We begin with the raw amino-acid sequence, 49 residues long: Small ribosomal subunit protein eS31 (49 aa).

Residues Cys-21, Cys-24, Cys-39, and Cys-42 each coordinate Zn(2+). The C4-type zinc-finger motif lies at 21–42; that stretch reads CPRCGPGTFLADHKNRLTCGKC.

It belongs to the eukaryotic ribosomal protein eS31 family. Part of the 30S ribosomal subunit. It depends on Zn(2+) as a cofactor.

The protein is Small ribosomal subunit protein eS31 of Methanosarcina barkeri (strain Fusaro / DSM 804).